A 327-amino-acid polypeptide reads, in one-letter code: Undecaprenyl-phosphate 4-deoxy-4-formamido-L-arabinose transferase (327 aa).

2 consecutive transmembrane segments (helical) span residues 236–256 (LSVF…LLVV) and 270–290 (VFML…AMGL).

It belongs to the glycosyltransferase 2 family.

Its subcellular location is the cell inner membrane. The enzyme catalyses UDP-4-deoxy-4-formamido-beta-L-arabinose + di-trans,octa-cis-undecaprenyl phosphate = 4-deoxy-4-formamido-alpha-L-arabinopyranosyl di-trans,octa-cis-undecaprenyl phosphate + UDP. It functions in the pathway glycolipid biosynthesis; 4-amino-4-deoxy-alpha-L-arabinose undecaprenyl phosphate biosynthesis; 4-amino-4-deoxy-alpha-L-arabinose undecaprenyl phosphate from UDP-4-deoxy-4-formamido-beta-L-arabinose and undecaprenyl phosphate: step 1/2. The protein operates within bacterial outer membrane biogenesis; lipopolysaccharide biosynthesis. Functionally, catalyzes the transfer of 4-deoxy-4-formamido-L-arabinose from UDP to undecaprenyl phosphate. The modified arabinose is attached to lipid A and is required for resistance to polymyxin and cationic antimicrobial peptides. The protein is Undecaprenyl-phosphate 4-deoxy-4-formamido-L-arabinose transferase of Enterobacter sp. (strain 638).